We begin with the raw amino-acid sequence, 590 residues long: UvrABC system protein C (590 aa).

One can recognise a GIY-YIG domain in the interval 14–91; the sequence is DQPGCYLMKD…IKKYDPKYNV (78 aa). The region spanning 196-231 is the UVR domain; that stretch reads NEVKKELEAKMLEASENLQFERAKEFRDQIAHIEST.

The protein belongs to the UvrC family. As to quaternary structure, interacts with UvrB in an incision complex.

The protein resides in the cytoplasm. Functionally, the UvrABC repair system catalyzes the recognition and processing of DNA lesions. UvrC both incises the 5' and 3' sides of the lesion. The N-terminal half is responsible for the 3' incision and the C-terminal half is responsible for the 5' incision. This is UvrABC system protein C from Bacillus licheniformis (strain ATCC 14580 / DSM 13 / JCM 2505 / CCUG 7422 / NBRC 12200 / NCIMB 9375 / NCTC 10341 / NRRL NRS-1264 / Gibson 46).